The chain runs to 78 residues: UPF0270 protein PC1_3850 (78 aa).

It belongs to the UPF0270 family.

The sequence is that of UPF0270 protein PC1_3850 from Pectobacterium carotovorum subsp. carotovorum (strain PC1).